The primary structure comprises 202 residues: Large ribosomal subunit protein bL9 (202 aa).

The segment at 168–202 (DEAGFTEDYDPNAEPGEIPTELQDEAPAAEATDEA) is disordered. The segment covering 192-202 (EAPAAEATDEA) has biased composition (low complexity).

Belongs to the bacterial ribosomal protein bL9 family.

In terms of biological role, binds to the 23S rRNA. This is Large ribosomal subunit protein bL9 from Rhizorhabdus wittichii (strain DSM 6014 / CCUG 31198 / JCM 15750 / NBRC 105917 / EY 4224 / RW1) (Sphingomonas wittichii).